Here is a 148-residue protein sequence, read N- to C-terminus: uncharacterized protein (148 aa).

The 142-residue stretch at leucine 7–arginine 148 folds into the N-acetyltransferase domain.

This is an uncharacterized protein from Staphylococcus aureus (strain Mu50 / ATCC 700699).